The primary structure comprises 302 residues: Succinate--CoA ligase [ADP-forming] subunit alpha (302 aa).

CoA-binding positions include Thr-17–Thr-20, Lys-43, and Ile-96–Glu-98. Tyr-159 is a binding site for substrate. His-247 (tele-phosphohistidine intermediate) is an active-site residue.

This sequence belongs to the succinate/malate CoA ligase alpha subunit family. Heterotetramer of two alpha and two beta subunits.

It carries out the reaction succinate + ATP + CoA = succinyl-CoA + ADP + phosphate. It catalyses the reaction GTP + succinate + CoA = succinyl-CoA + GDP + phosphate. It participates in carbohydrate metabolism; tricarboxylic acid cycle; succinate from succinyl-CoA (ligase route): step 1/1. In terms of biological role, succinyl-CoA synthetase functions in the citric acid cycle (TCA), coupling the hydrolysis of succinyl-CoA to the synthesis of either ATP or GTP and thus represents the only step of substrate-level phosphorylation in the TCA. The alpha subunit of the enzyme binds the substrates coenzyme A and phosphate, while succinate binding and nucleotide specificity is provided by the beta subunit. This chain is Succinate--CoA ligase [ADP-forming] subunit alpha, found in Staphylococcus epidermidis (strain ATCC 12228 / FDA PCI 1200).